We begin with the raw amino-acid sequence, 605 residues long: Ankyrin repeat domain-containing protein 13D (605 aa).

ANK repeat units lie at residues 39–68 and 72–101; these read RGRTPLELAVSLGNLESVRVLLRHNANVGK and QGWAVLQEAVSTGDPEMVQLVLQYRDYQRA. A disordered region spans residues 306 to 333; it reads AQQHSSHTGAPVQQAASPTNPTAISPEE. Positions 319–328 are enriched in polar residues; that stretch reads QAASPTNPTA. UIM domains lie at 482-501 and 528-547; these read EDDDLLQFAIQQSLLEAGTE and EEQLQLERALQESLQLSTEP. Residues 541–605 form a disordered region; it reads LQLSTEPRGP…RILQLSLTEH (65 aa). Residues 550–563 show a composition bias toward pro residues; that stretch reads PGSPPRTPPAPGPP. S552 bears the Phosphoserine mark. T556 carries the phosphothreonine modification. Residues 564 to 575 show a composition bias toward low complexity; the sequence is SFEEQLRLALEL. UIM domains lie at 564–583 and 589–605; these read SFEEQLRLALELSSREQEER and QEEEDLQRILQLSLTEH. A compositionally biased stretch (basic and acidic residues) spans 576 to 589; that stretch reads SSREQEERERRGQQ.

Interacts with EGFR (ubiquitinated); the interaction is direct and may regulate EGFR internalization.

The protein resides in the cell membrane. It localises to the late endosome. In terms of biological role, ubiquitin-binding protein that specifically recognizes and binds 'Lys-63'-linked ubiquitin. Does not bind 'Lys-48'-linked ubiquitin. Positively regulates the internalization of ligand-activated EGFR by binding to the Ub moiety of ubiquitinated EGFR at the cell membrane. In Homo sapiens (Human), this protein is Ankyrin repeat domain-containing protein 13D (ANKRD13D).